The sequence spans 397 residues: Homocitrate synthase AksA (397 aa).

The region spanning 19–270 is the Pyruvate carboxyltransferase domain; it reads VIVYDTTLRD…DPGFNTEVLA (252 aa).

The protein belongs to the alpha-IPM synthase/homocitrate synthase family.

The catalysed reaction is acetyl-CoA + 2-oxoglutarate + H2O = (2R)-homocitrate + CoA + H(+). The enzyme catalyses 2-oxoadipate + acetyl-CoA + H2O = (R)-dihomocitrate + CoA + H(+). It catalyses the reaction 2-oxoheptanedioate + acetyl-CoA + H2O = (R)-trihomocitrate + CoA + H(+). It functions in the pathway organic acid metabolism; 2-oxosuberate biosynthesis. Functionally, catalyzes the condensation of alpha-ketoglutarate and acetyl-CoA to form (R)-homocitrate. Can also catalyze the condensation of alpha-ketoadipate with acetyl-CoA to form (R)-homo(2)citrate, and the condensation of alpha-ketopimelate with acetyl-CoA to form (R)-homo(3)citrate. These reactions are part of the biosynthesis pathway of coenzyme B and biotin. The protein is Homocitrate synthase AksA (aksA) of Methanopyrus kandleri (strain AV19 / DSM 6324 / JCM 9639 / NBRC 100938).